Consider the following 390-residue polypeptide: Queuine tRNA-ribosyltransferase (390 aa).

The active-site Proton acceptor is Asp-90. Residues 90 to 94, Asp-144, Gln-197, and Gly-224 each bind substrate; that span reads DSGGF. Positions 255 to 261 are RNA binding; the sequence is GVGTPED. Catalysis depends on Asp-274, which acts as the Nucleophile. Residues 279-283 are RNA binding; important for wobble base 34 recognition; it reads TRNAR. The Zn(2+) site is built by Cys-312, Cys-314, Cys-317, and His-354.

It belongs to the queuine tRNA-ribosyltransferase family. Homodimer. Within each dimer, one monomer is responsible for RNA recognition and catalysis, while the other monomer binds to the replacement base PreQ1. Zn(2+) serves as cofactor.

It carries out the reaction 7-aminomethyl-7-carbaguanine + guanosine(34) in tRNA = 7-aminomethyl-7-carbaguanosine(34) in tRNA + guanine. The protein operates within tRNA modification; tRNA-queuosine biosynthesis. Functionally, catalyzes the base-exchange of a guanine (G) residue with the queuine precursor 7-aminomethyl-7-deazaguanine (PreQ1) at position 34 (anticodon wobble position) in tRNAs with GU(N) anticodons (tRNA-Asp, -Asn, -His and -Tyr). Catalysis occurs through a double-displacement mechanism. The nucleophile active site attacks the C1' of nucleotide 34 to detach the guanine base from the RNA, forming a covalent enzyme-RNA intermediate. The proton acceptor active site deprotonates the incoming PreQ1, allowing a nucleophilic attack on the C1' of the ribose to form the product. After dissociation, two additional enzymatic reactions on the tRNA convert PreQ1 to queuine (Q), resulting in the hypermodified nucleoside queuosine (7-(((4,5-cis-dihydroxy-2-cyclopenten-1-yl)amino)methyl)-7-deazaguanosine). The polypeptide is Queuine tRNA-ribosyltransferase (Leptothrix cholodnii (strain ATCC 51168 / LMG 8142 / SP-6) (Leptothrix discophora (strain SP-6))).